The sequence spans 111 residues: Cytochrome c3, 26 kDa (111 aa).

16 residues coordinate heme c: His-30, His-33, Cys-38, Cys-41, His-42, His-43, Cys-54, Cys-59, His-60, His-77, Cys-86, Cys-89, His-90, Cys-105, Cys-108, and His-109.

As to quaternary structure, homodimer. Heme c serves as cofactor.

The protein resides in the periplasm. Participates in sulfate respiration coupled with phosphorylation by transferring electrons from the enzyme dehydrogenase to ferredoxin. The chain is Cytochrome c3, 26 kDa from Desulfomicrobium norvegicum (strain DSM 1741 / NCIMB 8310) (Desulfovibrio baculatus (strain Norway 4)).